A 519-amino-acid chain; its full sequence is MWPLRFNNRFIDVLPCDPEVSLRSRQVLEAWSRVAPTPVPMPCLLAYSSEVAAILNFDAEELVTPRFVEVFSGNALYTGMQPYAVNYGGHQFGQWVGQLGDGRVITLGELLGADGVYYELQLKGAGPTPYSRGADGRAVLRSSIREFLCSEAMHHLGIPTTRALSLIATGDTVIRDMLYDGHPAPEPSAIVCRVAPSFIRFGTFELPASRGDIDLLRRLVEFTIIRDYPHLHGAGETLYADWFAEICTRTAELVAHWMRVGFVHGVMNTDNMSILGLTIDYGPYGWIDNNDLDWTPNVTDVQSRRYRFGAQPQVAYWNLGCLARALAPLFSDAASLQAGLERFRATYLAAERRDAAAKLGFAACFDEDLELFDALRTCMHQAEMDMTLTFLGLADWEPNMPDSLSLWAEAFYDPVKRDAQAPMLRDWLQRYAARLSVDPLPVAERHERMRLANPRYVLRNYLTQQAIECAEQGDLTELHALLEVMRRPYDFQLGREAYAMRRPEWARSRIGCSMLSCSS.

Positions 100, 102, 103, 123, 135, 136, 193, and 200 each coordinate ATP. Aspartate 270 functions as the Proton acceptor in the catalytic mechanism. Residues asparagine 271 and aspartate 280 each coordinate Mg(2+). Position 280 (aspartate 280) interacts with ATP.

The protein belongs to the SELO family. It depends on Mg(2+) as a cofactor. Mn(2+) is required as a cofactor.

The enzyme catalyses L-seryl-[protein] + ATP = 3-O-(5'-adenylyl)-L-seryl-[protein] + diphosphate. It catalyses the reaction L-threonyl-[protein] + ATP = 3-O-(5'-adenylyl)-L-threonyl-[protein] + diphosphate. It carries out the reaction L-tyrosyl-[protein] + ATP = O-(5'-adenylyl)-L-tyrosyl-[protein] + diphosphate. The catalysed reaction is L-histidyl-[protein] + UTP = N(tele)-(5'-uridylyl)-L-histidyl-[protein] + diphosphate. The enzyme catalyses L-seryl-[protein] + UTP = O-(5'-uridylyl)-L-seryl-[protein] + diphosphate. It catalyses the reaction L-tyrosyl-[protein] + UTP = O-(5'-uridylyl)-L-tyrosyl-[protein] + diphosphate. Nucleotidyltransferase involved in the post-translational modification of proteins. It can catalyze the addition of adenosine monophosphate (AMP) or uridine monophosphate (UMP) to a protein, resulting in modifications known as AMPylation and UMPylation. The polypeptide is Protein nucleotidyltransferase YdiU (Xylella fastidiosa (strain Temecula1 / ATCC 700964)).